The sequence spans 110 residues: U1-lycotoxin-Ls1jj (110 aa).

A signal peptide spans 1–20 (MKFVLLFGVLLVTLFSYSSA). Residues 21–44 (EMLDDFDQADEDELLSLIEKEEAR) constitute a propeptide that is removed on maturation. 4 cysteine pairs are disulfide-bonded: cysteine 47/cysteine 62, cysteine 54/cysteine 71, cysteine 61/cysteine 89, and cysteine 73/cysteine 87.

This sequence belongs to the neurotoxin 19 (CSTX) family. 03 subfamily. As to expression, expressed by the venom gland.

It localises to the secreted. In Lycosa singoriensis (Wolf spider), this protein is U1-lycotoxin-Ls1jj.